Consider the following 1458-residue polypeptide: MTGSSPPLSCQQVDNTLHIPALSCRGGFDFSLLFEELILGILPLGIVLIIAPFRLYHLFWRQAKVVASWLLWAKITAWLALGIVQLVLAVYWARPAATRTQASIAANAIITVGFFILCLLSCAEHLRSTTPSFLLNIYLLFTLLFDIAKTRTLWLRSSGQTDETIAILTSVTVGIKFLLLILEAVEKRHILRKGQSGYPPEATAGIFNRSFFLWLNPLFRSGFSKILDVEDLFDLDKHLSSRRLYSTLETLWDKVPKKNPNTLLFISLKAFKWPLLSAVPPRACLAALNFCQPLLLHRSLAFATEPVNNHTNSIGYGLIGAYILVYIGMGVTMGQYQHMTYRTITMVRGGVVSMIYNKASRLGIKDADPAASLTLMSADIERIVQGWQTIHDIWGNAAEIALAIYLLERELGVACVVPVGVALVALIGCLITLSFVVARQAVWLEAIERRISSTASMLSSMKGIKMLGLKSAIMKSLHGLRLEELEISKKFRRLLVWNMALGWTTRIFAPIFALGAFYGIMHSRGKDSAFDMSTAYTSLSLFALLADPLLSLVMALMTFVGSIGSFSRIQEFLEKDDHVDCRLKPLHASYESFEPKAMVLVDDSDATETASDRSIHRGKSVYHDALTVKNATFAWNVEKEPVLKGLTISIARGSFTMIVGPSGCGKSTLLKAILGEVPCVNGEIRLSSDSIAFCDQIPWHMNATIRESIVAMSSFDKEWYASVVHACGLVQDFEQLPRGDETVIGSKGIALSGGQSQRIALARAVYARKDIVILDDAFSGLDAATEDYVFHSLVGIHGLLRKINSTIIVASSSAKRLPYADQIVVLDKMGYASEQGSLKALNAAGGYVSSFGLGSPEWKSEIDKPSVTDLAQPKILRPNRTEAIKEDPRRQSGDLSIYLYYIRSIGWLPTRLVLTDMTGIWVKWWAISNEEDPNGRTGYYLGIYAMLGAVGMLSLIIGCWEMVINMVPKSGESFHRKLLATVLNAPMSFFAATDSGSILNRFSQDLQLIDMELPVAAINTFATLILCLAQMILMGIASRYAAISFPLVILAVYSIQKVYLRTSRQLRFLDLEAKAPLYSHFSDCLNGLVTLRAFGWQPALEDKNFQLLDYSQRPFYLLYAIQRWLTLTLDMVVAAIAVILIVLVVTLRGTISAGDVGVALLNVILFSQSIKLLVTFWTNLETHIGSIVRIRSFTETVSSENLPTEKDDVPPNWPWGGDIEFKSVSAEYRPSEPVLGDVSLTIKSGEKVGICGRTGSGKTSLIMSLFRMVELSSGSIHIDGVDITKIPRQEIRSRINGVSQSPLLIKGSIRRNMDPNGSYAEKAIIEAIKSVGLYTKIQEKGGLDTDISEVFLSQGQQQLFCLARAILRPGKVLVLDEATSNVDAKTDEIMQRVIREKFCTHTILAVAHKLETILDYDKVVVLDAGRVVESGDPCTLLSTEGSYFSRLYASSMALAEEQ.

Transmembrane regions (helical) follow at residues 30–50 (FSLL…VLII), 70–90 (LLWA…VLAV), 102–122 (ASIA…LLSC), 128–148 (STTP…FDIA), and 165–185 (IAIL…LEAV). Residue N208 is glycosylated (N-linked (GlcNAc...) asparagine). A helical transmembrane segment spans residues 273–295 (WPLLSAVPPRACLAALNFCQPLL). The ABC transmembrane type-1 1 domain occupies 283 to 561 (ACLAALNFCQ…LVMALMTFVG (279 aa)). N309 is a glycosylation site (N-linked (GlcNAc...) asparagine). A run of 5 helical transmembrane segments spans residues 314–334 (IGYG…VTMG), 387–407 (WQTI…IYLL), 411–431 (LGVA…GCLI), 501–521 (LGWT…YGIM), and 541–561 (LFAL…TFVG). Residues 626 to 853 (LTVKNATFAW…AGGYVSSFGL (228 aa)) enclose the ABC transporter 1 domain. N630 is a glycosylation site (N-linked (GlcNAc...) asparagine). 660 to 667 (GPSGCGKS) is an ATP binding site. N-linked (GlcNAc...) asparagine glycans are attached at residues N702, N804, and N879. The ABC transmembrane type-1 2 domain occupies 933–1182 (PNGRTGYYLG…LVTFWTNLET (250 aa)). A run of 6 helical transmembrane segments spans residues 940-960 (YLGI…IGCW), 978-998 (LLAT…SGSI), 1016-1036 (AAIN…LMGI), 1040-1060 (YAAI…KVYL), 1125-1145 (LTLT…VLVV), and 1156-1176 (VGVA…LVTF). Residues 1219–1449 (IEFKSVSAEY…EGSYFSRLYA (231 aa)) enclose the ABC transporter 2 domain. 1252-1259 (GRTGSGKT) provides a ligand contact to ATP. A glycan (N-linked (GlcNAc...) asparagine) is linked at N1316.

This sequence belongs to the ABC transporter superfamily. ABCC family. Conjugate transporter (TC 3.A.1.208) subfamily.

The protein resides in the cell membrane. Pleiotropic ABC efflux transporter that may be involved in A.fumigatus adaptation to azoles such as vorizonazole. The polypeptide is ABC multidrug transporter B (Aspergillus fumigatus (strain ATCC MYA-4609 / CBS 101355 / FGSC A1100 / Af293) (Neosartorya fumigata)).